The primary structure comprises 511 residues: Cytochrome P450 monooxygenase cypX (511 aa).

Residues 18–38 (LPFSLALVAAAFVLYNIVSII) form a helical membrane-spanning segment. Residues N162 and N407 are each glycosylated (N-linked (GlcNAc...) asparagine). C454 contributes to the heme binding site.

Belongs to the cytochrome P450 family. It depends on heme as a cofactor.

The protein localises to the membrane. It functions in the pathway mycotoxin biosynthesis. Functionally, cytochrome P450 monooxygenase; part of the fragmented gene cluster that mediates the biosynthesis of dothistromin (DOTH), a polyketide toxin very similar in structure to the aflatoxin precursor, versicolorin B. The first step of the pathway is the conversion of acetate to norsolorinic acid (NOR) and requires the fatty acid synthase subunits hexA and hexB, as well as the polyketide synthase pksA. PksA combines a hexanoyl starter unit and 7 malonyl-CoA extender units to synthesize the precursor NOR. The hexanoyl starter unit is provided to the acyl-carrier protein (ACP) domain by the fungal fatty acid synthase hexA/hexB. The second step is the conversion of NOR to averantin (AVN) and requires the norsolorinic acid ketoreductase nor1, which catalyzes the dehydration of norsolorinic acid to form (1'S)-averantin. The cytochrome P450 monooxygenase avnA then catalyzes the hydroxylation of AVN to 5'hydroxyaverantin (HAVN). The next step is performed by adhA that transforms HAVN to averufin (AVF). Averufin might then be converted to hydroxyversicolorone by cypX and avfA. Hydroxyversicolorone is further converted versiconal hemiacetal acetate (VHA) by moxY. VHA is then the substrate for the versiconal hemiacetal acetate esterase est1 to yield versiconal (VAL). Versicolorin B synthase vbsA then converts VAL to versicolorin B (VERB) by closing the bisfuran ring. Then, the activity of the versicolorin B desaturase verB leads to versicolorin A (VERA). DotB, a predicted chloroperoxidase, may perform epoxidation of the A-ring of VERA. Alternatively, a cytochrome P450, such as cypX or avnA could catalyze this step. It is also possible that another, uncharacterized, cytochrome P450 enzyme is responsible for this step. Opening of the epoxide could potentially be achieved by the epoxide hydrolase epoA. However, epoA seems not to be required for DOTH biosynthesis, but other epoxide hydrolases may have the ability to complement this hydrolysis. Alternatively, opening of the epoxide ring could be achieved non-enzymatically. The next step is the deoxygenation of ring A to yield the 5,8-dihydroxyanthraquinone which is most likely catalyzed by the NADPH dehydrogenase encoded by ver1. The last stages of DOTH biosynthesis are proposed to involve hydroxylation of the bisfuran. OrdB and norB might have oxidative roles here. An alternative possibility is that cytochrome P450 monoogenases such as avnA and cypX might perform these steps in addition to previously proposed steps. The polypeptide is Cytochrome P450 monooxygenase cypX (Dothistroma septosporum (Red band needle blight fungus)).